The following is a 134-amino-acid chain: Two-component response regulator ORR5 (134 aa).

Residues 16–133 (HVLAVDDSSV…DVSRLCSRVL (118 aa)) enclose the Response regulatory domain. Position 66 is a 4-aspartylphosphate (Asp-66).

The protein belongs to the ARR family. Type-A subfamily. Post-translationally, two-component system major event consists of a His-to-Asp phosphorelay between a sensor histidine kinase (HK) and a response regulator (RR). In plants, the His-to-Asp phosphorelay involves an additional intermediate named Histidine-containing phosphotransfer protein (HPt). This multistep phosphorelay consists of a His-Asp-His-Asp sequential transfer of a phosphate group between first a His and an Asp of the HK protein, followed by the transfer to a conserved His of the HPt protein and finally the transfer to an Asp in the receiver domain of the RR protein. As to expression, expressed in mature leaves and shoots, and at low levels in roots and flowers.

Functions as a response regulator involved in His-to-Asp phosphorelay signal transduction system. Phosphorylation of the Asp residue in the receiver domain activates the ability of the protein to promote the transcription of target genes. Type-A response regulators seem to act as negative regulators of the cytokinin signaling. The sequence is that of Two-component response regulator ORR5 from Oryza sativa subsp. indica (Rice).